The following is a 283-amino-acid chain: MKKKKIFIGTIISCVMLALSACGSSDNVVTSKVGNVTEKELSKELRQQYGESTLYQMMLSKALLDKYKVSDEEAKKKVEEAKDKMGENFKSTLEQLGLKNEDELKEKMKPEIAFEKAIKATVTDKDVKNNYKPEMKVSHILVKDEKTAKEIKEKVNNGEDFAALANQYSEDTGSKEQGGEISGFAPGQTVKEFEEAAYKLDAGQVSDPVKTTYGYHIIKVTDKKELKPFDEVKDKIRKDIEQQRLQDTTGKWKQQVVNDLLKDADIKVNNKEFKDTFKFLEKK.

The first 21 residues, 1-21 (MKKKKIFIGTIISCVMLALSA), serve as a signal peptide directing secretion. Residue cysteine 22 is the site of N-palmitoyl cysteine attachment. Cysteine 22 is lipidated: S-diacylglycerol cysteine. A PpiC domain is found at 132–222 (KPEMKVSHIL…YGYHIIKVTD (91 aa)).

Belongs to the PrsA family.

The protein localises to the cell membrane. It catalyses the reaction [protein]-peptidylproline (omega=180) = [protein]-peptidylproline (omega=0). Plays a major role in protein secretion by helping the post-translocational extracellular folding of several secreted proteins. In Bacillus cereus (strain ATCC 14579 / DSM 31 / CCUG 7414 / JCM 2152 / NBRC 15305 / NCIMB 9373 / NCTC 2599 / NRRL B-3711), this protein is Foldase protein PrsA 3 (prsA3).